The sequence spans 534 residues: Bifunctional purine biosynthesis protein PurH (534 aa).

The 146-residue stretch at 6–151 (TRLPIRRALI…KNHKDVAIVV (146 aa)) folds into the MGS-like domain.

It belongs to the PurH family.

The enzyme catalyses (6R)-10-formyltetrahydrofolate + 5-amino-1-(5-phospho-beta-D-ribosyl)imidazole-4-carboxamide = 5-formamido-1-(5-phospho-D-ribosyl)imidazole-4-carboxamide + (6S)-5,6,7,8-tetrahydrofolate. It carries out the reaction IMP + H2O = 5-formamido-1-(5-phospho-D-ribosyl)imidazole-4-carboxamide. It functions in the pathway purine metabolism; IMP biosynthesis via de novo pathway; 5-formamido-1-(5-phospho-D-ribosyl)imidazole-4-carboxamide from 5-amino-1-(5-phospho-D-ribosyl)imidazole-4-carboxamide (10-formyl THF route): step 1/1. Its pathway is purine metabolism; IMP biosynthesis via de novo pathway; IMP from 5-formamido-1-(5-phospho-D-ribosyl)imidazole-4-carboxamide: step 1/1. This chain is Bifunctional purine biosynthesis protein PurH, found in Pseudomonas syringae pv. tomato (strain ATCC BAA-871 / DC3000).